The sequence spans 189 residues: MQKLSFRQGLAQILNLLLVLSSAYMGYKTLSFVTDCESPVVVVLSESMEPSFQRGDLLFLDNRNPSFDEAKVPSVFEKIIYGSPVGIGDIVVYSLPDRPIPIVHRVVKLYESENQTHLITKGDNNKIDDVAMFPKSINYLDRENHILGVVRGYFPYLGMITIWLTDYPILKYIMLGGLGLLTLIQKEEQ.

At 1 to 8 (MQKLSFRQ) the chain is on the cytoplasmic side. A helical; Signal-anchor for type II membrane protein transmembrane segment spans residues 9 to 25 (GLAQILNLLLVLSSAYM). Topologically, residues 26–189 (GYKTLSFVTD…LLTLIQKEEQ (164 aa)) are lumenal. Catalysis depends on charge relay system residues S47 and H104. An N-linked (GlcNAc...) asparagine glycan is attached at N114. The active-site Charge relay system is the D129. The tract at residues 173–184 (IMLGGLGLLTLI) is C-terminal short (CTS) helix.

This sequence belongs to the peptidase S26B family. In terms of assembly, component of the signal peptidase complex (SPC) composed of a catalytic subunit sec11 and three accessory subunits spc1, spc2 and spc3. The complex induces a local thinning of the ER membrane which is used to measure the length of the signal peptide (SP) h-region of protein substrates. This ensures the selectivity of the complex towards h-regions shorter than 18-20 amino acids. SPC associates with the translocon complex.

It localises to the endoplasmic reticulum membrane. It carries out the reaction Cleavage of hydrophobic, N-terminal signal or leader sequences from secreted and periplasmic proteins.. Catalytic component of the signal peptidase complex (SPC) which catalyzes the cleavage of N-terminal signal sequences from nascent proteins as they are translocated into the lumen of the endoplasmic reticulum. Specifically cleaves N-terminal signal peptides that contain a hydrophobic alpha-helix (h-region) shorter than 18-20 amino acids. In Schizosaccharomyces pombe (strain 972 / ATCC 24843) (Fission yeast), this protein is Signal peptidase complex catalytic subunit sec11 (sec11).